The following is a 454-amino-acid chain: tRNA modification GTPase MnmE (454 aa).

Arginine 23, glutamate 80, and lysine 120 together coordinate (6S)-5-formyl-5,6,7,8-tetrahydrofolate. The region spanning 216–377 is the TrmE-type G domain; the sequence is GMKVVIAGRP…LRDHLKQSMG (162 aa). Asparagine 226 lines the K(+) pocket. GTP contacts are provided by residues 226–231, 245–251, 270–273, 335–338, and 358–360; these read NAGKSS, TDIAGTT, DTAG, NKAD, and SAR. Mg(2+) is bound at residue serine 230. Residues threonine 245, isoleucine 247, and threonine 250 each contribute to the K(+) site. Threonine 251 provides a ligand contact to Mg(2+). Lysine 454 provides a ligand contact to (6S)-5-formyl-5,6,7,8-tetrahydrofolate.

Belongs to the TRAFAC class TrmE-Era-EngA-EngB-Septin-like GTPase superfamily. TrmE GTPase family. As to quaternary structure, homodimer. Heterotetramer of two MnmE and two MnmG subunits. K(+) is required as a cofactor.

The protein resides in the cytoplasm. Its function is as follows. Exhibits a very high intrinsic GTPase hydrolysis rate. Involved in the addition of a carboxymethylaminomethyl (cmnm) group at the wobble position (U34) of certain tRNAs, forming tRNA-cmnm(5)s(2)U34. The polypeptide is tRNA modification GTPase MnmE (Yersinia pestis bv. Antiqua (strain Antiqua)).